The following is a 365-amino-acid chain: tRNA/tmRNA (uracil-C(5))-methyltransferase (365 aa).

Residues glutamine 189, tyrosine 217, asparagine 222, glutamate 238, and aspartate 298 each coordinate S-adenosyl-L-methionine. Cysteine 323 functions as the Nucleophile in the catalytic mechanism. Glutamate 357 acts as the Proton acceptor in catalysis.

This sequence belongs to the class I-like SAM-binding methyltransferase superfamily. RNA M5U methyltransferase family. TrmA subfamily.

The enzyme catalyses uridine(54) in tRNA + S-adenosyl-L-methionine = 5-methyluridine(54) in tRNA + S-adenosyl-L-homocysteine + H(+). It carries out the reaction uridine(341) in tmRNA + S-adenosyl-L-methionine = 5-methyluridine(341) in tmRNA + S-adenosyl-L-homocysteine + H(+). Functionally, dual-specificity methyltransferase that catalyzes the formation of 5-methyluridine at position 54 (m5U54) in all tRNAs, and that of position 341 (m5U341) in tmRNA (transfer-mRNA). This chain is tRNA/tmRNA (uracil-C(5))-methyltransferase, found in Saccharophagus degradans (strain 2-40 / ATCC 43961 / DSM 17024).